Consider the following 180-residue polypeptide: Endoribonuclease YbeY (180 aa).

The Zn(2+) site is built by histidine 149, histidine 153, and histidine 159.

Belongs to the endoribonuclease YbeY family. The cofactor is Zn(2+).

It localises to the cytoplasm. Its function is as follows. Single strand-specific metallo-endoribonuclease involved in late-stage 70S ribosome quality control and in maturation of the 3' terminus of the 16S rRNA. This Prochlorococcus marinus (strain MIT 9515) protein is Endoribonuclease YbeY.